The sequence spans 439 residues: 3-phosphoshikimate 1-carboxyvinyltransferase (439 aa).

Residues K31, S32, and R36 each contribute to the 3-phosphoshikimate site. Residue K31 coordinates phosphoenolpyruvate. Phosphoenolpyruvate-binding residues include G103 and R131. The 3-phosphoshikimate site is built by S175, Q177, D322, and K349. Residue Q177 coordinates phosphoenolpyruvate. The Proton acceptor role is filled by D322. Residues R353 and R397 each contribute to the phosphoenolpyruvate site.

It belongs to the EPSP synthase family. Monomer.

Its subcellular location is the cytoplasm. It catalyses the reaction 3-phosphoshikimate + phosphoenolpyruvate = 5-O-(1-carboxyvinyl)-3-phosphoshikimate + phosphate. Its pathway is metabolic intermediate biosynthesis; chorismate biosynthesis; chorismate from D-erythrose 4-phosphate and phosphoenolpyruvate: step 6/7. In terms of biological role, catalyzes the transfer of the enolpyruvyl moiety of phosphoenolpyruvate (PEP) to the 5-hydroxyl of shikimate-3-phosphate (S3P) to produce enolpyruvyl shikimate-3-phosphate and inorganic phosphate. This Clostridium tetani (strain Massachusetts / E88) protein is 3-phosphoshikimate 1-carboxyvinyltransferase.